The chain runs to 161 residues: uncharacterized protein (161 aa).

This is an uncharacterized protein from Caenorhabditis elegans.